The sequence spans 330 residues: MNTLGSGLKIIGSGTAIADQSLTNQDLSNIVETSDEWIQSRTGMRQRYICSAQENLASLGVKAGQKALAMAGLQPEDLDLIILATSTPDDLFGTAAQIQGGLGATRAFAFDITAACSGFVVGLNVAAQFLRTGVYQRVLIVGGDVLSRWVDWSDRTTCVLFGDGAGAVVLQRQAQDNLLAFEMYTDGTGNGCLNLSYQANPQPLTAEKTVAQGTYQAITMNGREVYRFAVAKVPEIIEKVLFKAQLTTSDLDWVILHQANQRIMDAVGDRLGIPSEKIISNVGEYGNTSAASIPLALDQAVREGKIKEGDLIALAGFGAGLTWAASIVRW.

Residues cysteine 116 and histidine 257 contribute to the active site. The ACP-binding stretch occupies residues 258 to 262; it reads QANQR. The active site involves asparagine 287.

This sequence belongs to the thiolase-like superfamily. FabH family. In terms of assembly, homodimer.

Its subcellular location is the cytoplasm. The catalysed reaction is malonyl-[ACP] + acetyl-CoA + H(+) = 3-oxobutanoyl-[ACP] + CO2 + CoA. The protein operates within lipid metabolism; fatty acid biosynthesis. In terms of biological role, catalyzes the condensation reaction of fatty acid synthesis by the addition to an acyl acceptor of two carbons from malonyl-ACP. Catalyzes the first condensation reaction which initiates fatty acid synthesis and may therefore play a role in governing the total rate of fatty acid production. Possesses both acetoacetyl-ACP synthase and acetyl transacylase activities. Its substrate specificity determines the biosynthesis of branched-chain and/or straight-chain of fatty acids. The chain is Beta-ketoacyl-[acyl-carrier-protein] synthase III from Synechocystis sp. (strain ATCC 27184 / PCC 6803 / Kazusa).